The sequence spans 423 residues: UPF0229 protein PFLU_5583 (423 aa).

The interval 64–109 (LHHGRGGKQTVVHPGNKEFTTGEHIQRPQGGGGGKGPGKAGNSGEG) is disordered. A compositionally biased stretch (gly residues) spans 92–107 (QGGGGGKGPGKAGNSG).

This sequence belongs to the UPF0229 family.

In Pseudomonas fluorescens (strain SBW25), this protein is UPF0229 protein PFLU_5583.